Here is an 858-residue protein sequence, read N- to C-terminus: MMNQLLIAILLASACLVYCTQYVTVFYGVPTWKNATIPLFCATRNRDTWGTIQCLPDNDDYQEITLNVTEAFDAWNNTVTEQAIEDVWHLFETSIKPCVKLTPLCVAMKCSSTESSTGNNTTSKSTSTTTTTPTDQEQEISEDTPCARADNCSGLGEEETINCQFNMTGLERDKKKQYNETWYSKDVVCETNNSTNQTQCYMNHCNTSVITESCDKHYWDAIRFRYCAPPGYALLRCNDTNYSGFAPNCSKVVASTCTRMMETQTSTWFGFNGTRAENRTYIYWHGRDNRTIISLNKYYNLSLHCKRPGNKTVKQIMLMSGHVFHSHYQPINKRPRQAWCWFKGKWKDAMQEVKETLAKHPRYRGTNDTRNISFAAPGKGSDPEVAYMWTNCRGEFLYCNMTWFLNWIENKTHRNYAPCHIKQIINTWHKVGRNVYLPPREGELSCNSTVTSIIANIDWQNNNQTNITFSAEVAELYRLELGDYKLVEITPIGFAPTKEKRYSSAHGRHTRGVFVLGFLGFLATAGSAMGAASLTVSAQSRTLLAGIVQQQQQLLDVVKRQQELLRLTVWGTKNLQARVTAIEKYLQDQARLNSWGCAFRQVCHTTVPWVNDSLAPDWDNMTWQEWEKQVRYLEANISKSLEQAQIQQEKNMYELQKLNSWDIFGNWFDLTSWVKYIQYGVLIIVAVIALRIVIYVVQMLSRLRKGYRPVFSSPPGYIQQIHIHKDRGQPANEETEEDGGSNGGDRYWPWPIAYIHFLIRQLIRLLTRLYSICRDLLSRSFLTLQLIYQNLRDWLRLRTAFLQYGCEWIQEAFQAAARATRETLAGACRGLWRVLERIGRGILAVPRRIRQGAEIALL.

The signal sequence occupies residues 1–19; the sequence is MMNQLLIAILLASACLVYC. The Extracellular portion of the chain corresponds to 20–679; the sequence is TQYVTVFYGV…LTSWVKYIQY (660 aa). Asparagine 34 carries an N-linked (GlcNAc...) asparagine; by host glycan. Cysteine 41 and cysteine 54 are joined by a disulfide. 26 N-linked (GlcNAc...) asparagine; by host glycosylation sites follow: asparagine 67, asparagine 76, asparagine 119, asparagine 120, asparagine 151, asparagine 166, asparagine 179, asparagine 192, asparagine 193, asparagine 196, asparagine 206, asparagine 238, asparagine 241, asparagine 248, asparagine 272, asparagine 278, asparagine 289, asparagine 300, asparagine 310, asparagine 367, asparagine 371, asparagine 400, asparagine 410, asparagine 447, asparagine 463, and asparagine 466. Cystine bridges form between cysteine 98-cysteine 214, cysteine 105-cysteine 205, cysteine 110-cysteine 163, cysteine 227-cysteine 257, and cysteine 237-cysteine 249. A V1 region spans residues 110–162; it reads CSSTESSTGNNTTSKSTSTTTTTPTDQEQEISEDTPCARADNCSGLGEEETIN. The segment covering 111 to 134 has biased composition (low complexity); it reads SSTESSTGNNTTSKSTSTTTTTPT. The segment at 111-142 is disordered; that stretch reads SSTESSTGNNTTSKSTSTTTTTPTDQEQEISE. The V2 stretch occupies residues 163-205; the sequence is CQFNMTGLERDKKKQYNETWYSKDVVCETNNSTNQTQCYMNHC. The V3 stretch occupies residues 305 to 339; sequence CKRPGNKTVKQIMLMSGHVFHSHYQPINKRPRQAW. A disulfide bond links cysteine 305 and cysteine 340. 2 disulfides stabilise this stretch: cysteine 392-cysteine 446 and cysteine 399-cysteine 419. Residues 399 to 419 are V4; sequence CNMTWFLNWIENKTHRNYAPC. The tract at residues 462–469 is V5; sequence NNQTNITF. A fusion peptide region spans residues 512–532; it reads GVFVLGFLGFLATAGSAMGAA. Positions 575–591 are immunosuppression; sequence LQARVTAIEKYLQDQAR. 3 N-linked (GlcNAc...) asparagine; by host glycosylation sites follow: asparagine 611, asparagine 620, and asparagine 636. Residues 624–645 are a coiled coil; that stretch reads QEWEKQVRYLEANISKSLEQAQ. Positions 657–678 are MPER; binding to GalCer; it reads KLNSWDIFGNWFDLTSWVKYIQ. The chain crosses the membrane as a helical span at residues 680 to 700; sequence GVLIIVAVIALRIVIYVVQML. The Cytoplasmic portion of the chain corresponds to 701–858; sequence SRLRKGYRPV…IRQGAEIALL (158 aa). A YXXV motif; contains endocytosis signal motif is present at residues 707-710; the sequence is YRPV. Cysteine 773 carries S-palmitoyl cysteine; by host lipidation. A Di-leucine internalization motif motif is present at residues 857 to 858; the sequence is LL.

The mature envelope protein (Env) consists of a homotrimer of non-covalently associated gp120-gp41 heterodimers. The resulting complex protrudes from the virus surface as a spike. There seems to be as few as 10 spikes on the average virion. Interacts with human CD4, CCR5 and CXCR4, to form a P4HB/PDI-CD4-CXCR4-gp120 complex. Gp120 also interacts with the C-type lectins CD209/DC-SIGN and CLEC4M/DC-SIGNR (collectively referred to as DC-SIGN(R)). Gp120 and gp41 interact with GalCer. In terms of assembly, the mature envelope protein (Env) consists of a homotrimer of non-covalently associated gp120-gp41 heterodimers. The resulting complex protrudes from the virus surface as a spike. There seems to be as few as 10 spikes on the average virion. Specific enzymatic cleavages in vivo yield mature proteins. Envelope glycoproteins are synthesized as an inactive precursor that is heavily N-glycosylated and processed likely by host cell furin in the Golgi to yield the mature SU and TM proteins. The cleavage site between SU and TM requires the minimal sequence [KR]-X-[KR]-R. Post-translationally, palmitoylation of the transmembrane protein and of Env polyprotein (prior to its proteolytic cleavage) is essential for their association with host cell membrane lipid rafts. Palmitoylation is therefore required for envelope trafficking to classical lipid rafts, but not for viral replication.

The protein resides in the virion membrane. The protein localises to the host cell membrane. It localises to the host endosome membrane. The surface protein gp120 (SU) attaches the virus to the host lymphoid cell by binding to the primary receptor CD4. This interaction induces a structural rearrangement creating a high affinity binding site for a chemokine coreceptor like CXCR4 and/or CCR5. This peculiar 2 stage receptor-interaction strategy allows gp120 to maintain the highly conserved coreceptor-binding site in a cryptic conformation, protected from neutralizing antibodies. Since CD4 also displays a binding site for the disulfide-isomerase P4HB/PDI, a P4HB/PDI-CD4-CXCR4-gp120 complex may form. In that complex, P4HB/PDI could reach and reduce gp120 disulfide bonds, causing major conformational changes in gp120. TXN, another PDI family member could also be involved in disulfide rearrangements in Env during fusion. These changes are transmitted to the transmembrane protein gp41 and are thought to activate its fusogenic potential by unmasking its fusion peptide. In terms of biological role, the surface protein gp120 is a ligand for CD209/DC-SIGN and CLEC4M/DC-SIGNR, which are respectively found on dendritic cells (DCs), and on endothelial cells of liver sinusoids and lymph node sinuses. These interactions allow capture of viral particles at mucosal surfaces by these cells and subsequent transmission to permissive cells. DCs are professional antigen presenting cells, critical for host immunity by inducing specific immune responses against a broad variety of pathogens. They act as sentinels in various tissues where they take up antigen, process it, and present it to T-cells following migration to lymphoid organs. HIV subverts the migration properties of dendritic cells to gain access to CD4+ T-cells in lymph nodes. Virus transmission to permissive T-cells occurs either in trans (without DCs infection, through viral capture and transmission), or in cis (following DCs productive infection, through the usual CD4-gp120 interaction), thereby inducing a robust infection. In trans infection, bound virions remain infectious over days and it is proposed that they are not degraded, but protected in non-lysosomal acidic organelles within the DCs close to the cell membrane thus contributing to the viral infectious potential during DCs' migration from the periphery to the lymphoid tissues. On arrival at lymphoid tissues, intact virions recycle back to DCs' cell surface allowing virus transmission to CD4+ T-cells. Virion capture also seems to lead to MHC-II-restricted viral antigen presentation, and probably to the activation of HIV-specific CD4+ cells. Its function is as follows. The transmembrane protein gp41 (TM) acts as a class I viral fusion protein. Under the current model, the protein has at least 3 conformational states: pre-fusion native state, pre-hairpin intermediate state, and post-fusion hairpin state. During fusion of viral and target intracellular membranes, the coiled coil regions (heptad repeats) assume a trimer-of-hairpins structure, positioning the fusion peptide in close proximity to the C-terminal region of the ectodomain. The formation of this structure appears to drive apposition and subsequent fusion of viral and target cell membranes. Complete fusion occurs in host cell endosomes and is dynamin-dependent, however some lipid transfer might occur at the plasma membrane. The virus undergoes clathrin-dependent internalization long before endosomal fusion, thus minimizing the surface exposure of conserved viral epitopes during fusion and reducing the efficacy of inhibitors targeting these epitopes. Membranes fusion leads to delivery of the nucleocapsid into the cytoplasm. Functionally, the envelope glycoprotein gp160 precursor down-modulates cell surface CD4 antigen by interacting with it in the endoplasmic reticulum and blocking its transport to the cell surface. The gp120-gp41 heterodimer seems to contribute to T-cell depletion during HIV-1 infection. The envelope glycoproteins expressed on the surface of infected cells induce apoptosis through an interaction with uninfected cells expressing the receptor (CD4) and the coreceptors CXCR4 or CCR5. This type of bystander killing may be obtained by at least three distinct mechanisms. First, the interaction between the 2 cells can induce cellular fusion followed by nuclear fusion within the syncytium. Syncytia are condemned to die from apoptosis. Second, the 2 interacting cells may not fuse entirely and simply exchange plasma membrane lipids, after a sort of hemifusion process, followed by rapid death. Third, it is possible that virus-infected cells, on the point of undergoing apoptosis, fuse with CD4-expressing cells, in which case apoptosis is rapidly transmitted from one cell to the other and thus occurs in a sort of contagious fashion. In terms of biological role, the gp120-gp41 heterodimer allows rapid transcytosis of the virus through CD4 negative cells such as simple epithelial monolayers of the intestinal, rectal and endocervical epithelial barriers. Both gp120 and gp41 specifically recognize glycosphingolipids galactosyl-ceramide (GalCer) or 3' sulfo-galactosyl-ceramide (GalS) present in the lipid rafts structures of epithelial cells. Binding to these alternative receptors allows the rapid transcytosis of the virus through the epithelial cells. This transcytotic vesicle-mediated transport of virions from the apical side to the basolateral side of the epithelial cells does not involve infection of the cells themselves. This is Envelope glycoprotein gp160 (env) from Homo sapiens (Human).